The primary structure comprises 69 residues: uncharacterized protein (69 aa).

2 consecutive transmembrane segments (helical) span residues 15-35 and 36-56; these read LIIG…ICYV and LYII…IPKT.

The protein localises to the cell membrane. This is an uncharacterized protein from Methanocaldococcus jannaschii (strain ATCC 43067 / DSM 2661 / JAL-1 / JCM 10045 / NBRC 100440) (Methanococcus jannaschii).